Here is a 473-residue protein sequence, read N- to C-terminus: Siroheme synthase (473 aa).

A precorrin-2 dehydrogenase /sirohydrochlorin ferrochelatase region spans residues 1–222 (MNTQPHHSSP…GDESRADARL (222 aa)). Residues 37–38 (EI) and 58–59 (EK) contribute to the NAD(+) site. The interval 233 to 473 (GEVWLVGAGP…QVVRHRVVSP (241 aa)) is uroporphyrinogen-III C-methyltransferase. Pro-242 contributes to the S-adenosyl-L-methionine binding site. Asp-265 (proton acceptor) is an active-site residue. The active-site Proton donor is the Lys-287. S-adenosyl-L-methionine is bound by residues 318–320 (GGD), Ile-323, 348–349 (SA), Met-401, and Gly-430.

This sequence in the N-terminal section; belongs to the precorrin-2 dehydrogenase / sirohydrochlorin ferrochelatase family. In the C-terminal section; belongs to the precorrin methyltransferase family.

It catalyses the reaction uroporphyrinogen III + 2 S-adenosyl-L-methionine = precorrin-2 + 2 S-adenosyl-L-homocysteine + H(+). The enzyme catalyses precorrin-2 + NAD(+) = sirohydrochlorin + NADH + 2 H(+). It carries out the reaction siroheme + 2 H(+) = sirohydrochlorin + Fe(2+). Its pathway is cofactor biosynthesis; adenosylcobalamin biosynthesis; precorrin-2 from uroporphyrinogen III: step 1/1. The protein operates within cofactor biosynthesis; adenosylcobalamin biosynthesis; sirohydrochlorin from precorrin-2: step 1/1. It functions in the pathway porphyrin-containing compound metabolism; siroheme biosynthesis; precorrin-2 from uroporphyrinogen III: step 1/1. It participates in porphyrin-containing compound metabolism; siroheme biosynthesis; siroheme from sirohydrochlorin: step 1/1. Its pathway is porphyrin-containing compound metabolism; siroheme biosynthesis; sirohydrochlorin from precorrin-2: step 1/1. Multifunctional enzyme that catalyzes the SAM-dependent methylations of uroporphyrinogen III at position C-2 and C-7 to form precorrin-2 via precorrin-1. Then it catalyzes the NAD-dependent ring dehydrogenation of precorrin-2 to yield sirohydrochlorin. Finally, it catalyzes the ferrochelation of sirohydrochlorin to yield siroheme. The chain is Siroheme synthase from Gluconobacter oxydans (strain 621H) (Gluconobacter suboxydans).